Reading from the N-terminus, the 435-residue chain is Ornithine decarboxylase (435 aa).

An N6-(pyridoxal phosphate)lysine modification is found at K76. Pyridoxal 5'-phosphate-binding positions include S207, G244, and 283 to 286; that span reads EPGR. 339–340 is a substrate binding site; sequence FD. Catalysis depends on C368, which acts as the Proton donor; shared with dimeric partner. A substrate-binding site is contributed by D369. Residue Y397 coordinates pyridoxal 5'-phosphate.

Belongs to the Orn/Lys/Arg decarboxylase class-II family. Homodimer. Only the dimer is catalytically active, as the active sites are constructed of residues from both monomers. Pyridoxal 5'-phosphate is required as a cofactor.

The enzyme catalyses L-ornithine + H(+) = putrescine + CO2. Its pathway is amine and polyamine biosynthesis; putrescine biosynthesis via L-ornithine pathway; putrescine from L-ornithine: step 1/1. With respect to regulation, inhibited by antizyme (AZ) in response to polyamine levels. AZ inhibits the assembly of the functional homodimer by binding to ODC monomers and targeting them for ubiquitin-independent proteolytic destruction by the 26S proteasome. Catalyzes the first and rate-limiting step of polyamine biosynthesis that converts ornithine into putrescine, which is the precursor for the polyamines, spermidine and spermine. Polyamines are essential for cell proliferation and are implicated in cellular processes, ranging from DNA replication to apoptosis. This is Ornithine decarboxylase (ODC) from Panagrellus redivivus (Microworm).